The following is a 432-amino-acid chain: Phosphomethylpyrimidine synthase (432 aa).

Substrate is bound by residues N66, M95, Y124, H163, 185-187 (SRG), 226-229 (DGLR), and E265. Zn(2+) is bound at residue H269. Y292 provides a ligand contact to substrate. Position 333 (H333) interacts with Zn(2+). C409, C412, and C416 together coordinate [4Fe-4S] cluster.

The protein belongs to the ThiC family. Requires [4Fe-4S] cluster as cofactor.

The catalysed reaction is 5-amino-1-(5-phospho-beta-D-ribosyl)imidazole + S-adenosyl-L-methionine = 4-amino-2-methyl-5-(phosphooxymethyl)pyrimidine + CO + 5'-deoxyadenosine + formate + L-methionine + 3 H(+). It participates in cofactor biosynthesis; thiamine diphosphate biosynthesis. Catalyzes the synthesis of the hydroxymethylpyrimidine phosphate (HMP-P) moiety of thiamine from aminoimidazole ribotide (AIR) in a radical S-adenosyl-L-methionine (SAM)-dependent reaction. The chain is Phosphomethylpyrimidine synthase from Moorella thermoacetica (strain ATCC 39073 / JCM 9320).